An 89-amino-acid polypeptide reads, in one-letter code: Small ribosomal subunit protein uS14 (89 aa).

The segment at 32 to 51 (DYEGLQKLPKNSSPVRLHNR) is disordered.

The protein belongs to the universal ribosomal protein uS14 family. As to quaternary structure, part of the 30S ribosomal subunit. Contacts proteins S3 and S10.

Functionally, binds 16S rRNA, required for the assembly of 30S particles and may also be responsible for determining the conformation of the 16S rRNA at the A site. The sequence is that of Small ribosomal subunit protein uS14 from Christiangramia forsetii (strain DSM 17595 / CGMCC 1.15422 / KT0803) (Gramella forsetii).